Consider the following 189-residue polypeptide: Large ribosomal subunit protein uL6 (189 aa).

This sequence belongs to the universal ribosomal protein uL6 family. As to quaternary structure, part of the 50S ribosomal subunit.

Functionally, this protein binds to the 23S rRNA, and is important in its secondary structure. It is located near the subunit interface in the base of the L7/L12 stalk, and near the tRNA binding site of the peptidyltransferase center. The polypeptide is Large ribosomal subunit protein uL6 (Bacteroides fragilis (strain ATCC 25285 / DSM 2151 / CCUG 4856 / JCM 11019 / LMG 10263 / NCTC 9343 / Onslow / VPI 2553 / EN-2)).